Consider the following 243-residue polypeptide: Ubiquinone/menaquinone biosynthesis C-methyltransferase UbiE (243 aa).

Residues threonine 69, aspartate 90, and 116–117 each bind S-adenosyl-L-methionine; that span reads DA.

This sequence belongs to the class I-like SAM-binding methyltransferase superfamily. MenG/UbiE family.

The catalysed reaction is a 2-demethylmenaquinol + S-adenosyl-L-methionine = a menaquinol + S-adenosyl-L-homocysteine + H(+). It carries out the reaction a 2-methoxy-6-(all-trans-polyprenyl)benzene-1,4-diol + S-adenosyl-L-methionine = a 5-methoxy-2-methyl-3-(all-trans-polyprenyl)benzene-1,4-diol + S-adenosyl-L-homocysteine + H(+). The protein operates within quinol/quinone metabolism; menaquinone biosynthesis; menaquinol from 1,4-dihydroxy-2-naphthoate: step 2/2. It functions in the pathway cofactor biosynthesis; ubiquinone biosynthesis. Its function is as follows. Methyltransferase required for the conversion of demethylmenaquinol (DMKH2) to menaquinol (MKH2) and the conversion of 2-polyprenyl-6-methoxy-1,4-benzoquinol (DDMQH2) to 2-polyprenyl-3-methyl-6-methoxy-1,4-benzoquinol (DMQH2). In Cupriavidus necator (strain ATCC 17699 / DSM 428 / KCTC 22496 / NCIMB 10442 / H16 / Stanier 337) (Ralstonia eutropha), this protein is Ubiquinone/menaquinone biosynthesis C-methyltransferase UbiE.